We begin with the raw amino-acid sequence, 303 residues long: Signal recognition particle receptor FtsY (303 aa).

GTP contacts are provided by residues 108–115, 190–194, and 254–257; these read GVNGAGKT, DTAGR, and TKLD.

It belongs to the GTP-binding SRP family. FtsY subfamily. Part of the signal recognition particle protein translocation system, which is composed of SRP and FtsY. SRP is a ribonucleoprotein composed of Ffh and a 4.5S RNA molecule.

The protein localises to the cell inner membrane. It localises to the cytoplasm. It catalyses the reaction GTP + H2O = GDP + phosphate + H(+). In terms of biological role, involved in targeting and insertion of nascent membrane proteins into the cytoplasmic membrane. Acts as a receptor for the complex formed by the signal recognition particle (SRP) and the ribosome-nascent chain (RNC). Interaction with SRP-RNC leads to the transfer of the RNC complex to the Sec translocase for insertion into the membrane, the hydrolysis of GTP by both Ffh and FtsY, and the dissociation of the SRP-FtsY complex into the individual components. The polypeptide is Signal recognition particle receptor FtsY (Rickettsia bellii (strain RML369-C)).